The sequence spans 55 residues: ATP synthase F(0) complex subunit 8 (55 aa).

Residues 7 to 24 (NPWFFIMLLSWLTFSLII) form a helical membrane-spanning segment. Residues 35–55 (NPPSNKTTTHTKTTPWTWPWT) are disordered. The segment covering 37-55 (PSNKTTTHTKTTPWTWPWT) has biased composition (low complexity).

Belongs to the ATPase protein 8 family. In terms of assembly, component of the ATP synthase complex composed at least of ATP5F1A/subunit alpha, ATP5F1B/subunit beta, ATP5MC1/subunit c (homooctomer), MT-ATP6/subunit a, MT-ATP8/subunit 8, ATP5ME/subunit e, ATP5MF/subunit f, ATP5MG/subunit g, ATP5MK/subunit k, ATP5MJ/subunit j, ATP5F1C/subunit gamma, ATP5F1D/subunit delta, ATP5F1E/subunit epsilon, ATP5PF/subunit F6, ATP5PB/subunit b, ATP5PD/subunit d, ATP5PO/subunit OSCP. ATP synthase complex consists of a soluble F(1) head domain (subunits alpha(3) and beta(3)) - the catalytic core - and a membrane F(0) domain - the membrane proton channel (subunits c, a, 8, e, f, g, k and j). These two domains are linked by a central stalk (subunits gamma, delta, and epsilon) rotating inside the F1 region and a stationary peripheral stalk (subunits F6, b, d, and OSCP).

It localises to the mitochondrion membrane. Its function is as follows. Subunit 8, of the mitochondrial membrane ATP synthase complex (F(1)F(0) ATP synthase or Complex V) that produces ATP from ADP in the presence of a proton gradient across the membrane which is generated by electron transport complexes of the respiratory chain. ATP synthase complex consist of a soluble F(1) head domain - the catalytic core - and a membrane F(1) domain - the membrane proton channel. These two domains are linked by a central stalk rotating inside the F(1) region and a stationary peripheral stalk. During catalysis, ATP synthesis in the catalytic domain of F(1) is coupled via a rotary mechanism of the central stalk subunits to proton translocation. In vivo, can only synthesize ATP although its ATP hydrolase activity can be activated artificially in vitro. Part of the complex F(0) domain. This chain is ATP synthase F(0) complex subunit 8, found in Chaetura pelagica (Chimney swift).